Consider the following 118-residue polypeptide: UPF0342 protein BT9727_0768 (118 aa).

This sequence belongs to the UPF0342 family.

The protein is UPF0342 protein BT9727_0768 of Bacillus thuringiensis subsp. konkukian (strain 97-27).